Consider the following 410-residue polypeptide: Neuroserpin (410 aa).

A signal peptide spans 1-16 (MYFLGLLSLLVLPSKA). Residues Asn157 and Asn401 are each glycosylated (N-linked (GlcNAc...) asparagine).

This sequence belongs to the serpin family. As to expression, detected in embryonic ocular vitreous fluid (at protein level). In the embryo present in retina, brain, cerebellum and spinal cord. In adult, predominantly expressed in the brain.

It is found in the secreted. Its subcellular location is the cytoplasmic vesicle. The protein localises to the secretory vesicle lumen. The protein resides in the perikaryon. Functionally, serine protease inhibitor that inhibits plasminogen activators and plasmin but not thrombin. May be involved in the formation or reorganization of synaptic connections as well as for synaptic plasticity in the adult nervous system. May protect neurons from cell damage by tissue-type plasminogen activator. This Gallus gallus (Chicken) protein is Neuroserpin (SERPINI1).